The primary structure comprises 295 residues: Acetylglutamate kinase (295 aa).

Substrate contacts are provided by residues 64–65, Arg-86, and Asn-190; that span reads GG.

The protein belongs to the acetylglutamate kinase family. ArgB subfamily.

The protein localises to the cytoplasm. The enzyme catalyses N-acetyl-L-glutamate + ATP = N-acetyl-L-glutamyl 5-phosphate + ADP. Its pathway is amino-acid biosynthesis; L-arginine biosynthesis; N(2)-acetyl-L-ornithine from L-glutamate: step 2/4. Functionally, catalyzes the ATP-dependent phosphorylation of N-acetyl-L-glutamate. This chain is Acetylglutamate kinase, found in Oleidesulfovibrio alaskensis (strain ATCC BAA-1058 / DSM 17464 / G20) (Desulfovibrio alaskensis).